We begin with the raw amino-acid sequence, 386 residues long: Aspartate carbamoyltransferase 1, chloroplastic (386 aa).

The N-terminal 39 residues, 1 to 39 (MTVASMLSSNSMNVGVSNPKMSSKTSACCLLNRPWPSSC), are a transit peptide targeting the chloroplast. Arginine 132 and threonine 133 together coordinate carbamoyl phosphate. Arginine 132 and threonine 133 together coordinate UMP. Lysine 162 contacts L-aspartate. Arginine 183, histidine 211, and glutamine 214 together coordinate carbamoyl phosphate. Residues arginine 183 and histidine 211 each contribute to the UMP site. 2 residues coordinate UMP: arginine 244 and arginine 306. L-aspartate-binding residues include arginine 244 and arginine 306. Residues leucine 346 and proline 347 each contribute to the carbamoyl phosphate site.

The protein belongs to the aspartate/ornithine carbamoyltransferase superfamily. ATCase family. As to quaternary structure, homotrimer.

The protein resides in the plastid. It localises to the chloroplast. It carries out the reaction carbamoyl phosphate + L-aspartate = N-carbamoyl-L-aspartate + phosphate + H(+). It functions in the pathway pyrimidine metabolism; UMP biosynthesis via de novo pathway; (S)-dihydroorotate from bicarbonate: step 2/3. With respect to regulation, feedback inhibited by UMP. Functionally, catalyzes the condensation of carbamoyl phosphate and aspartate to form carbamoyl aspartate and inorganic phosphate, the committed step in the de novo pyrimidine nucleotide biosynthesis pathway. This is Aspartate carbamoyltransferase 1, chloroplastic (PYRB1) from Pisum sativum (Garden pea).